The sequence spans 387 residues: Ferrochelatase (387 aa).

The ferrochelatase stretch occupies residues 1 to 318 (MGRVGVLLLN…VFIDALAQMV (318 aa)). Residues histidine 196 and glutamate 277 each contribute to the Fe cation site. A hlip domain region spans residues 319–387 (MDSLNDPPCT…QGPLHFVGLL (69 aa)).

In the N-terminal section; belongs to the ferrochelatase family. This sequence in the C-terminal section; belongs to the Hlip family.

It localises to the cytoplasm. It carries out the reaction heme b + 2 H(+) = protoporphyrin IX + Fe(2+). It participates in porphyrin-containing compound metabolism; protoheme biosynthesis; protoheme from protoporphyrin-IX: step 1/1. Catalyzes the ferrous insertion into protoporphyrin IX. Functionally, the Hlip proteins might regulate tetrapyrrole biosynthesis, maybe at the level of aminolevulinic acid synthesis. Deletion of 4 to 5 members of the Hlip family (always including this member) suggests the proteins are involved in regulation of chlorophyll biosynthesis, in stabilization of chlorophyll-binding proteins and/or in reuse of chlorophylls, and may regulate tetrapyrrole biosynthesis. The Hlip proteins probably stabilize PSII assembly intermediates. This Synechocystis sp. (strain ATCC 27184 / PCC 6803 / Kazusa) protein is Ferrochelatase.